The following is a 750-amino-acid chain: GRIP and coiled-coil domain-containing protein C27D7.02c (750 aa).

Disordered regions lie at residues 14–53 (AQGQ…AKNM) and 188–280 (KTVE…RDIA). Basic and acidic residues-rich tracts occupy residues 18 to 34 (EEAK…DQLR) and 188 to 198 (KTVETKNDVPE). Residues 28-182 (QEEDQLRRNN…AQSIEQEVIS (155 aa)) are a coiled coil. Polar residues predominate over residues 201 to 213 (RPSTDTIGVSSAL). The stretch at 213-243 (LSKKKKKRNRKNQKKKSTKQNIEATTENDAL) forms a coiled coil. Basic residues predominate over residues 214 to 230 (SKKKKKRNRKNQKKKST). Residues 233–251 (NIEATTENDALSESISTPD) are compositionally biased toward polar residues. Basic and acidic residues predominate over residues 269–280 (ADSKEEERRDIA). Residues 344 to 665 (KLVEELTKQL…YEHLQKSFKN (322 aa)) are a coiled coil. Residues 672-703 (KQQPSNHGRNSSVSRSSSSVEVNSKHPGSDDM) are disordered. The span at 676 to 693 (SNHGRNSSVSRSSSSVEV) shows a compositional bias: low complexity. The segment covering 694-703 (NSKHPGSDDM) has biased composition (basic and acidic residues). One can recognise a GRIP domain in the interval 700–748 (SDDMLIDKEYTRNILFQFLEQRDRRPEIVNLLSILLDLSEEQKQKLLSV).

It is found in the cytoplasm. In Schizosaccharomyces pombe (strain 972 / ATCC 24843) (Fission yeast), this protein is GRIP and coiled-coil domain-containing protein C27D7.02c.